The sequence spans 137 residues: Small ribosomal subunit protein uS11 (137 aa).

The tract at residues 116-137 (EDVTPIPHDGTRRPGGKRGRRV) is disordered.

This sequence belongs to the universal ribosomal protein uS11 family. In terms of assembly, part of the 30S ribosomal subunit.

Located on the platform of the 30S subunit. The protein is Small ribosomal subunit protein uS11 of Methanopyrus kandleri (strain AV19 / DSM 6324 / JCM 9639 / NBRC 100938).